The sequence spans 222 residues: WAP four-disulfide core domain protein 1 (222 aa).

Residues 1-32 form the signal peptide; the sequence is MDSRMLSDQRFCRRIFAAALCVLVLLADSGCA. One can recognise a WAP domain in the interval 61 to 110; sequence HYQKNDRCPPPPQTLPDRACEVPSCRSDSECERHKRCCYNGCIYACLESV. 4 disulfide bridges follow: Cys-68/Cys-98, Cys-80/Cys-102, Cys-85/Cys-97, and Cys-91/Cys-106.

It localises to the secreted. Has growth inhibitory activity. This Gallus gallus (Chicken) protein is WAP four-disulfide core domain protein 1 (WFDC1).